A 184-amino-acid polypeptide reads, in one-letter code: Peptide deformylase 2 (184 aa).

Fe cation-binding residues include cysteine 110 and histidine 153. The active site involves glutamate 154. Histidine 157 is a Fe cation binding site.

It belongs to the polypeptide deformylase family. Fe(2+) serves as cofactor.

It carries out the reaction N-terminal N-formyl-L-methionyl-[peptide] + H2O = N-terminal L-methionyl-[peptide] + formate. Removes the formyl group from the N-terminal Met of newly synthesized proteins. Requires at least a dipeptide for an efficient rate of reaction. N-terminal L-methionine is a prerequisite for activity but the enzyme has broad specificity at other positions. In Bacillus subtilis (strain 168), this protein is Peptide deformylase 2 (defB).